Reading from the N-terminus, the 310-residue chain is Malate dehydrogenase (310 aa).

Residues 7-13 (GAAGGIG) and aspartate 34 contribute to the NAD(+) site. 2 residues coordinate substrate: arginine 81 and arginine 87. NAD(+) contacts are provided by residues asparagine 94 and 117 to 119 (ITN). Residues asparagine 119 and arginine 153 each contribute to the substrate site. Histidine 177 acts as the Proton acceptor in catalysis. Methionine 227 contributes to the NAD(+) binding site.

It belongs to the LDH/MDH superfamily. MDH type 1 family. As to quaternary structure, homodimer.

The enzyme catalyses (S)-malate + NAD(+) = oxaloacetate + NADH + H(+). Its function is as follows. Catalyzes the reversible oxidation of malate to oxaloacetate. The polypeptide is Malate dehydrogenase (Vibrio vulnificus (strain CMCP6)).